The primary structure comprises 347 residues: D-alanine--D-alanine ligase (347 aa).

Positions 131–333 constitute an ATP-grasp domain; that stretch reads KRVLESAGIA…YPKLIERLVD (203 aa). Residue 161–216 participates in ATP binding; it reads EEKLAYPVFTKPSNMGSSVGISKSENQEELRQALKLAFRYDSRVLVEQGVNAREIE. Residues Asp-287, Glu-300, and Asn-302 each coordinate Mg(2+).

It belongs to the D-alanine--D-alanine ligase family. The cofactor is Mg(2+). Requires Mn(2+) as cofactor.

Its subcellular location is the cytoplasm. It carries out the reaction 2 D-alanine + ATP = D-alanyl-D-alanine + ADP + phosphate + H(+). It participates in cell wall biogenesis; peptidoglycan biosynthesis. Cell wall formation. This chain is D-alanine--D-alanine ligase, found in Streptococcus pneumoniae serotype 4 (strain ATCC BAA-334 / TIGR4).